The primary structure comprises 266 residues: Putative hydro-lyase VF_1377 (266 aa).

Belongs to the D-glutamate cyclase family.

In Aliivibrio fischeri (strain ATCC 700601 / ES114) (Vibrio fischeri), this protein is Putative hydro-lyase VF_1377.